The chain runs to 455 residues: MQGSAKMAMAVAVAVARVWRPSRGLGRTGLPLLRLLGARGLARFHPHRWQQQQHFSSLDDKPQFPGASAEFIDKLEFIQPNVISGIPIYRVMDRQGQIINPSEDPHLPQEKVLKFYKSMTLLNTMDRILYESQRQGRISFYMTNYGEEGTHVGSAAALDDTDLVFGQYREAGVLMYRDYPLELFMAQCYGNVSDLGKGRQMPVHYGCRERHFVTISSPLATQIPQAVGAAYAAKRANANRVVICYFGEGAASEGDAHAGFNFAATLECPIIFFCRNNGYAISTPTSEQYRGDGIAARGPGYGILSIRVDGNDVFAVYNATKEARRRAVAENQPFLIEAMTYRIGHHSTSDDSSAYRSVDEVNYWDKQDHPISRLRHHLQSRGWWDDEQEKAWRKQSRKKVMEAFEQAERKLKPNPSLIFSDVYQEMPAQLRKQQESLARHLQTYGEHYPLDHFEK.

The N-terminal 55 residues, 1–55 (MQGSAKMAMAVAVAVARVWRPSRGLGRTGLPLLRLLGARGLARFHPHRWQQQQHF), are a transit peptide targeting the mitochondrion. Residues Tyr-168 and Arg-169 each contribute to the thiamine diphosphate site. Ser-216 lines the K(+) pocket. Ser-217 is a binding site for thiamine diphosphate. K(+) is bound by residues Pro-218, Thr-221, and Gln-222. Glu-248 contributes to the Mg(2+) binding site. Gly-249, Ala-250, and Arg-275 together coordinate thiamine diphosphate. Asn-277 and Tyr-279 together coordinate Mg(2+). Thiamine diphosphate is bound at residue His-346. Ser-347 carries the post-translational modification Phosphoserine; by BCKDK. Thr-348 bears the Phosphothreonine mark. Ser-349 and Ser-357 each carry phosphoserine. Lys-366 is modified (N6-acetyllysine; alternate). At Lys-366 the chain carries N6-succinyllysine; alternate. Position 390 is an N6-succinyllysine (Lys-390).

Belongs to the BCKDHA family. Heterotetramer of 2 alpha/BCKDHA and 2 beta chains/BCKDHB that forms the branched-chain alpha-keto acid decarboxylase (E1) component of the BCKD complex. The branched-chain alpha-ketoacid dehydrogenase is a large complex composed of three major building blocks E1, E2 and E3. It is organized around E2, a 24-meric cubic core composed of DBT, to which are associated 6 to 12 copies of E1, and approximately 6 copies of the dehydrogenase E3, a DLD dimer. Interacts with PPM1K. Requires thiamine diphosphate as cofactor. Mg(2+) is required as a cofactor. In terms of processing, phosphorylated at Ser-347 by BCKDK and dephosphorylated by protein phosphatase PPM1K. As to expression, expressed in kidney (at protein level).

It localises to the mitochondrion matrix. It catalyses the reaction N(6)-[(R)-lipoyl]-L-lysyl-[protein] + 3-methyl-2-oxobutanoate + H(+) = N(6)-[(R)-S(8)-2-methylpropanoyldihydrolipoyl]-L-lysyl-[protein] + CO2. Its function is as follows. Together with BCKDHB forms the heterotetrameric E1 subunit of the mitochondrial branched-chain alpha-ketoacid dehydrogenase (BCKD) complex. The BCKD complex catalyzes the multi-step oxidative decarboxylation of alpha-ketoacids derived from the branched-chain amino-acids valine, leucine and isoleucine producing CO2 and acyl-CoA which is subsequently utilized to produce energy. The E1 subunit catalyzes the first step with the decarboxylation of the alpha-ketoacid forming an enzyme-product intermediate. A reductive acylation mediated by the lipoylamide cofactor of E2 extracts the acyl group from the E1 active site for the next step of the reaction. This Bos taurus (Bovine) protein is 2-oxoisovalerate dehydrogenase subunit alpha, mitochondrial (BCKDHA).